The primary structure comprises 640 residues: Antigenic protein NP1 (640 aa).

The Peptidase M60 domain maps to 1-288 (VQVSIGKCNH…SYVNIAHAFG (288 aa)). The PA14 domain maps to 463–615 (LDPHQVEYEV…TDQSSVNVSK (153 aa)).

In Entamoeba histolytica, this protein is Antigenic protein NP1.